We begin with the raw amino-acid sequence, 191 residues long: Probable DNA replication complex GINS protein PSF1 (191 aa).

It belongs to the GINS1/PSF1 family. In terms of assembly, component of the GINS complex which is a heterotetramer of gins1, gins2, gins3 and gins4.

It is found in the nucleus. In terms of biological role, the GINS complex plays an essential role in the initiation of DNA replication. This is Probable DNA replication complex GINS protein PSF1 (gins1) from Dictyostelium discoideum (Social amoeba).